Reading from the N-terminus, the 124-residue chain is Small ribosomal subunit protein uS12 (124 aa).

At Asp89 the chain carries 3-methylthioaspartic acid. Residues 103 to 124 (DTAGVKDRRQGRSKYGAKRPKD) form a disordered region. Basic residues predominate over residues 113 to 124 (GRSKYGAKRPKD).

This sequence belongs to the universal ribosomal protein uS12 family. In terms of assembly, part of the 30S ribosomal subunit. Contacts proteins S8 and S17. May interact with IF1 in the 30S initiation complex.

Its function is as follows. With S4 and S5 plays an important role in translational accuracy. Interacts with and stabilizes bases of the 16S rRNA that are involved in tRNA selection in the A site and with the mRNA backbone. Located at the interface of the 30S and 50S subunits, it traverses the body of the 30S subunit contacting proteins on the other side and probably holding the rRNA structure together. The combined cluster of proteins S8, S12 and S17 appears to hold together the shoulder and platform of the 30S subunit. This is Small ribosomal subunit protein uS12 from Acaryochloris marina (strain MBIC 11017).